A 106-amino-acid polypeptide reads, in one-letter code: Small ribosomal subunit protein bS20 (106 aa).

Basic residues predominate over residues 1-20 (MATAKPKKKNPRLASGRKRV). A disordered region spans residues 1-21 (MATAKPKKKNPRLASGRKRVR).

Belongs to the bacterial ribosomal protein bS20 family.

Functionally, binds directly to 16S ribosomal RNA. This Polaromonas naphthalenivorans (strain CJ2) protein is Small ribosomal subunit protein bS20.